We begin with the raw amino-acid sequence, 352 residues long: Mitochondrial hydrolase YKR070W (352 aa).

This sequence belongs to the HAD-like hydrolase superfamily.

It localises to the mitochondrion. The sequence is that of Mitochondrial hydrolase YKR070W from Saccharomyces cerevisiae (strain ATCC 204508 / S288c) (Baker's yeast).